The following is a 344-amino-acid chain: MDENKKRALAAALSQIEKQFGKGSVMRMGDRVIEAVEVIPTGSLMLDIALGTGGLPKGRVVEIYGPESSGKTTLTLQAIAQCQKLGGTAAFIDAEHALDPVYAAKLGVNVDDLLLSQPDTGEQALEIADMLVRSSSVDIVVIDSVAALTPKAEIEGEMGDQLPGLQARLMSQALRKLTGNIKRSNTLVVFINQLRMKIGVMMPGQSPEVTTGGNALKFYASVRLDIRRIGAIKKGDEIIGNQTKIKVVKNKLAPPFKQVVTEILYGEGISREGELIDMGVEAKLVEKAGAWYSYGDERIGQGKDNARTYLRDNPQVAVRLEAELREKFQPAEAPREAGDDEEKE.

An ATP-binding site is contributed by 65–72; the sequence is GPESSGKT.

The protein belongs to the RecA family.

The protein resides in the cytoplasm. In terms of biological role, can catalyze the hydrolysis of ATP in the presence of single-stranded DNA, the ATP-dependent uptake of single-stranded DNA by duplex DNA, and the ATP-dependent hybridization of homologous single-stranded DNAs. It interacts with LexA causing its activation and leading to its autocatalytic cleavage. This is Protein RecA from Xanthomonas oryzae pv. oryzae (strain PXO99A).